A 707-amino-acid chain; its full sequence is Acetyl-coenzyme A synthetase 1 (707 aa).

Residues 242–245 and threonine 361 contribute to the CoA site; that span reads RGGK. ATP contacts are provided by residues 437–439, 461–466, aspartate 553, and arginine 568; these read GEP and DTYWQT. Serine 576 is a binding site for CoA. Arginine 579 lines the ATP pocket. Arginine 644 serves as a coordination point for CoA. The Microbody targeting signal signature appears at 705–707; the sequence is VKL.

This sequence belongs to the ATP-dependent AMP-binding enzyme family.

It localises to the microsome. The protein localises to the endoplasmic reticulum. It carries out the reaction acetate + ATP + CoA = acetyl-CoA + AMP + diphosphate. Functionally, may be required for assimilation of ethanol and acetate. This is Acetyl-coenzyme A synthetase 1 (ACS1) from Kluyveromyces lactis (strain ATCC 8585 / CBS 2359 / DSM 70799 / NBRC 1267 / NRRL Y-1140 / WM37) (Yeast).